We begin with the raw amino-acid sequence, 276 residues long: Phosphate import ATP-binding protein PstB 2 (276 aa).

Residues Met-22–Val-262 enclose the ABC transporter domain. Residue Gly-54–Thr-61 participates in ATP binding.

This sequence belongs to the ABC transporter superfamily. Phosphate importer (TC 3.A.1.7) family. In terms of assembly, the complex is composed of two ATP-binding proteins (PstB), two transmembrane proteins (PstC and PstA) and a solute-binding protein (PstS).

It is found in the cell membrane. The catalysed reaction is phosphate(out) + ATP + H2O = ADP + 2 phosphate(in) + H(+). Part of the ABC transporter complex PstSACB involved in phosphate import. Responsible for energy coupling to the transport system. The polypeptide is Phosphate import ATP-binding protein PstB 2 (Mycobacterium bovis (strain ATCC BAA-935 / AF2122/97)).